The primary structure comprises 76 residues: Omega-conotoxin-like TxO5 (76 aa).

An N-terminal signal peptide occupies residues 1 to 22 (MKLTCMMIVAVLFLTAWTFVTA). A propeptide spanning residues 23–48 (ITSNGLENLFPKAHHEMKNPEASKLN) is cleaved from the precursor. Cystine bridges form between Cys-51–Cys-66, Cys-58–Cys-70, and Cys-65–Cys-75.

This sequence belongs to the conotoxin O1 superfamily. Expressed by the venom duct.

It is found in the secreted. In terms of biological role, omega-conotoxins act at presynaptic membranes, they bind and block voltage-gated calcium channels (Cav). This is Omega-conotoxin-like TxO5 from Conus textile (Cloth-of-gold cone).